A 269-amino-acid polypeptide reads, in one-letter code: UPF0329 protein ECU04_1660 (269 aa).

The span at M1–S12 shows a compositional bias: basic and acidic residues. Residues M1–E74 form a disordered region. Residues K13–K23 are compositionally biased toward basic residues. Residues G24–D36 are compositionally biased toward basic and acidic residues. Residues R37 to V51 show a composition bias toward acidic residues.

Belongs to the UPF0329 family.

The chain is UPF0329 protein ECU04_1660 from Encephalitozoon cuniculi (strain GB-M1) (Microsporidian parasite).